Reading from the N-terminus, the 339-residue chain is Ketol-acid reductoisomerase (NADP(+)) (339 aa).

Residues 1–182 (MRVYYDRDAD…GGGRAGIIET (182 aa)) form the KARI N-terminal Rossmann domain. NADP(+) is bound by residues 24-27 (YGSQ), Arg-48, Ser-51, Thr-53, and 83-86 (DELQ). Residue His-108 is part of the active site. NADP(+) is bound at residue Gly-134. Residues 183 to 328 (TFKEECETDL…AKLRGMMPWI (146 aa)) enclose the KARI C-terminal knotted domain. Mg(2+)-binding residues include Asp-191, Glu-195, Glu-227, and Glu-231. Ser-252 lines the substrate pocket.

This sequence belongs to the ketol-acid reductoisomerase family. It depends on Mg(2+) as a cofactor.

It carries out the reaction (2R)-2,3-dihydroxy-3-methylbutanoate + NADP(+) = (2S)-2-acetolactate + NADPH + H(+). It catalyses the reaction (2R,3R)-2,3-dihydroxy-3-methylpentanoate + NADP(+) = (S)-2-ethyl-2-hydroxy-3-oxobutanoate + NADPH + H(+). It participates in amino-acid biosynthesis; L-isoleucine biosynthesis; L-isoleucine from 2-oxobutanoate: step 2/4. Its pathway is amino-acid biosynthesis; L-valine biosynthesis; L-valine from pyruvate: step 2/4. Involved in the biosynthesis of branched-chain amino acids (BCAA). Catalyzes an alkyl-migration followed by a ketol-acid reduction of (S)-2-acetolactate (S2AL) to yield (R)-2,3-dihydroxy-isovalerate. In the isomerase reaction, S2AL is rearranged via a Mg-dependent methyl migration to produce 3-hydroxy-3-methyl-2-ketobutyrate (HMKB). In the reductase reaction, this 2-ketoacid undergoes a metal-dependent reduction by NADPH to yield (R)-2,3-dihydroxy-isovalerate. This chain is Ketol-acid reductoisomerase (NADP(+)), found in Methylorubrum extorquens (strain CM4 / NCIMB 13688) (Methylobacterium extorquens).